A 342-amino-acid chain; its full sequence is UDP-3-O-acylglucosamine N-acyltransferase (342 aa).

The active-site Proton acceptor is the H241.

This sequence belongs to the transferase hexapeptide repeat family. LpxD subfamily. In terms of assembly, homotrimer.

The enzyme catalyses a UDP-3-O-[(3R)-3-hydroxyacyl]-alpha-D-glucosamine + a (3R)-hydroxyacyl-[ACP] = a UDP-2-N,3-O-bis[(3R)-3-hydroxyacyl]-alpha-D-glucosamine + holo-[ACP] + H(+). Its pathway is bacterial outer membrane biogenesis; LPS lipid A biosynthesis. Its function is as follows. Catalyzes the N-acylation of UDP-3-O-acylglucosamine using 3-hydroxyacyl-ACP as the acyl donor. Is involved in the biosynthesis of lipid A, a phosphorylated glycolipid that anchors the lipopolysaccharide to the outer membrane of the cell. This Pasteurella multocida (strain Pm70) protein is UDP-3-O-acylglucosamine N-acyltransferase.